The following is a 341-amino-acid chain: tRNA N6-adenosine threonylcarbamoyltransferase (341 aa).

Positions 120 and 124 each coordinate Fe cation. Substrate contacts are provided by residues 142–146 (VVSGG), Asp-175, Gly-188, Asp-192, and Asn-281. Residue Asp-310 coordinates Fe cation.

Belongs to the KAE1 / TsaD family. It depends on Fe(2+) as a cofactor.

The protein localises to the cytoplasm. The catalysed reaction is L-threonylcarbamoyladenylate + adenosine(37) in tRNA = N(6)-L-threonylcarbamoyladenosine(37) in tRNA + AMP + H(+). In terms of biological role, required for the formation of a threonylcarbamoyl group on adenosine at position 37 (t(6)A37) in tRNAs that read codons beginning with adenine. Is involved in the transfer of the threonylcarbamoyl moiety of threonylcarbamoyl-AMP (TC-AMP) to the N6 group of A37, together with TsaE and TsaB. TsaD likely plays a direct catalytic role in this reaction. The polypeptide is tRNA N6-adenosine threonylcarbamoyltransferase (Anoxybacillus flavithermus (strain DSM 21510 / WK1)).